Here is a 312-residue protein sequence, read N- to C-terminus: Protoheme IX farnesyltransferase (312 aa).

A run of 8 helical transmembrane segments spans residues valine 31–histidine 51, proline 52–leucine 72, isoleucine 119–isoleucine 139, isoleucine 152–glycine 172, isoleucine 179–phenylalanine 199, isoleucine 225–phenylalanine 245, valine 247–valine 267, and isoleucine 288–leucine 308.

This sequence belongs to the UbiA prenyltransferase family. Protoheme IX farnesyltransferase subfamily.

It is found in the cell inner membrane. It catalyses the reaction heme b + (2E,6E)-farnesyl diphosphate + H2O = Fe(II)-heme o + diphosphate. Its pathway is porphyrin-containing compound metabolism; heme O biosynthesis; heme O from protoheme: step 1/1. In terms of biological role, converts heme B (protoheme IX) to heme O by substitution of the vinyl group on carbon 2 of heme B porphyrin ring with a hydroxyethyl farnesyl side group. In Rhodopseudomonas palustris (strain ATCC BAA-98 / CGA009), this protein is Protoheme IX farnesyltransferase.